The chain runs to 325 residues: Melanocortin receptor 5 (325 aa).

Residues 1 to 37 (MNSSSTLTVLNLTLNASEDGILGSNVKNKSLACEEMG) lie on the Extracellular side of the membrane. N-linked (GlcNAc...) asparagine glycans are attached at residues N2, N11, N15, and N28. The helical transmembrane segment at 38-61 (IAVEVFLTLGLVSLLENILVIGAI) threads the bilayer. Topologically, residues 62–73 (VKNKNLHSPMYF) are cytoplasmic. A helical membrane pass occupies residues 74–97 (FVGSLAVADMLVSMSNAWETVTIY). Residues 98-114 (LLNNKHLVIADTFVRHI) are Extracellular-facing. A helical membrane pass occupies residues 115 to 138 (DNVFDSMICISVVASMCSLLAIAV). Over 139-155 (DRYITIFYALRYHHIMT) the chain is Cytoplasmic. A helical membrane pass occupies residues 156–179 (ARRSGVIIACIWTFCISCGIVFII). Residues 180-186 (YYESKYV) lie on the Extracellular side of the membrane. A helical membrane pass occupies residues 187–211 (IICLISMFFTMLFFMVSLYIHMFLL). The Cytoplasmic segment spans residues 212 to 239 (ARNHVKRIAASPRYNSVRQRTSMKGAIT). The helical transmembrane segment at 240–265 (LTMLLGIFIVCWSPFFLHLILMISCP) threads the bilayer. The Extracellular segment spans residues 266-273 (QNVYCSCF). The helical transmembrane segment at 274-297 (MSYFNMYLILIMCNSVIDPLIYAL) threads the bilayer. At 298–325 (RSQEMRRTFKEIVCCHGFRRPCRLLGGY) the chain is on the cytoplasmic side. S-palmitoyl cysteine attachment occurs at residues C311 and C312.

It belongs to the G-protein coupled receptor 1 family. Skin, adrenal gland, skeletal muscle, bone marrow, spleen, thymus, gonads, uterus and brain.

It localises to the cell membrane. In terms of biological role, receptor for MSH (alpha, beta and gamma) and ACTH. The activity of this receptor is mediated by G proteins which activate adenylate cyclase. This receptor is a possible mediator of the immunomodulation properties of melanocortins. The chain is Melanocortin receptor 5 (Mc5r) from Mus musculus (Mouse).